The chain runs to 263 residues: Indole-3-glycerol phosphate synthase (263 aa).

Belongs to the TrpC family.

It catalyses the reaction 1-(2-carboxyphenylamino)-1-deoxy-D-ribulose 5-phosphate + H(+) = (1S,2R)-1-C-(indol-3-yl)glycerol 3-phosphate + CO2 + H2O. It participates in amino-acid biosynthesis; L-tryptophan biosynthesis; L-tryptophan from chorismate: step 4/5. In Rhodospirillum rubrum (strain ATCC 11170 / ATH 1.1.1 / DSM 467 / LMG 4362 / NCIMB 8255 / S1), this protein is Indole-3-glycerol phosphate synthase.